Here is a 258-residue protein sequence, read N- to C-terminus: Ribonuclease PH (258 aa).

Residues Arg-88 and 126–128 contribute to the phosphate site; that span reads GTR.

This sequence belongs to the RNase PH family. As to quaternary structure, homohexameric ring arranged as a trimer of dimers.

The enzyme catalyses tRNA(n+1) + phosphate = tRNA(n) + a ribonucleoside 5'-diphosphate. Functionally, phosphorolytic 3'-5' exoribonuclease that plays an important role in tRNA 3'-end maturation. Removes nucleotide residues following the 3'-CCA terminus of tRNAs; can also add nucleotides to the ends of RNA molecules by using nucleoside diphosphates as substrates, but this may not be physiologically important. Probably plays a role in initiation of 16S rRNA degradation (leading to ribosome degradation) during starvation. The polypeptide is Ribonuclease PH (Mycobacteroides abscessus (strain ATCC 19977 / DSM 44196 / CCUG 20993 / CIP 104536 / JCM 13569 / NCTC 13031 / TMC 1543 / L948) (Mycobacterium abscessus)).